A 143-amino-acid polypeptide reads, in one-letter code: Large ribosomal subunit protein uL11 (143 aa).

The protein belongs to the universal ribosomal protein uL11 family. In terms of assembly, part of the ribosomal stalk of the 50S ribosomal subunit. Interacts with L10 and the large rRNA to form the base of the stalk. L10 forms an elongated spine to which L12 dimers bind in a sequential fashion forming a multimeric L10(L12)X complex. In terms of processing, one or more lysine residues are methylated.

Forms part of the ribosomal stalk which helps the ribosome interact with GTP-bound translation factors. This chain is Large ribosomal subunit protein uL11, found in Teredinibacter turnerae (strain ATCC 39867 / T7901).